The primary structure comprises 145 residues: Transcription antitermination protein NusB (145 aa).

Belongs to the NusB family.

In terms of biological role, involved in transcription antitermination. Required for transcription of ribosomal RNA (rRNA) genes. Binds specifically to the boxA antiterminator sequence of the ribosomal RNA (rrn) operons. The polypeptide is Transcription antitermination protein NusB (Geotalea uraniireducens (strain Rf4) (Geobacter uraniireducens)).